Consider the following 399-residue polypeptide: Developmentally-regulated G-protein 1 (399 aa).

One can recognise an OBG-type G domain in the interval 63–288; it reads GRVALIGFPS…LLARMWDEMG (226 aa). GTP contacts are provided by residues 69 to 76, 115 to 119, and 246 to 249; these read GFPSVGKS, DLPGI, and NKID. The TGS domain maps to 288–366; that stretch reads GLVRVYSKPQ…EDEDVVQIVK (79 aa). The tract at residues 367–399 is disordered; it reads KKERDEGGRGRFKSHSNAPARIADREKKAPLKQ. Positions 388-399 are enriched in basic and acidic residues; it reads IADREKKAPLKQ.

It belongs to the TRAFAC class OBG-HflX-like GTPase superfamily. OBG GTPase family. As to expression, expressed in actively growing tissues and reproductive organs. Mostly expressed in leaves, stems and siliques. Also present in flowers and flower buds, and, to a lower extent, in roots.

It localises to the cytoplasmic vesicle. Its subcellular location is the cytoplasm. Its function is as follows. Binds GDP and GTP, and has low GTPase activity. May interact with phosphatidic acid (PA). This is Developmentally-regulated G-protein 1 (DRG1) from Arabidopsis thaliana (Mouse-ear cress).